Consider the following 557-residue polypeptide: Large cysteine-rich periplasmic protein OmcB (557 aa).

The first 22 residues, methionine 1–alanine 22, serve as a signal peptide directing secretion. A propeptide spanning residues serine 23–alanine 40 is cleaved from the precursor.

Part of a disulfide cross-linked outer membrane complex (COMC) composed of the major outer membrane porin (MOMP), the small cysteine-rich protein (OmcA) and the large cysteine-rich periplasmic protein (OmcB).

The protein localises to the periplasm. Its function is as follows. In elementary bodies (EBs, the infectious stage, which is able to survive outside the host cell) provides the structural integrity of the outer envelope through disulfide cross-links with the small cysteine-rich protein and the major outer membrane porin. It has been described in publications as the Sarkosyl-insoluble COMC (Chlamydia outer membrane complex), and serves as the functional equivalent of peptidoglycan. It is present but the disulfide bonds are reduced in reticulate bodies (RBs). The chain is Large cysteine-rich periplasmic protein OmcB (omcB) from Chlamydia abortus (strain DSM 27085 / S26/3) (Chlamydophila abortus).